We begin with the raw amino-acid sequence, 313 residues long: Formimidoylglutamase (313 aa).

Mn(2+) contacts are provided by His-130, Asp-155, His-157, Asp-159, Asp-241, and Asp-243.

Belongs to the arginase family. It depends on Mn(2+) as a cofactor.

It catalyses the reaction N-formimidoyl-L-glutamate + H2O = formamide + L-glutamate. It functions in the pathway amino-acid degradation; L-histidine degradation into L-glutamate; L-glutamate from N-formimidoyl-L-glutamate (hydrolase route): step 1/1. Functionally, catalyzes the conversion of N-formimidoyl-L-glutamate to L-glutamate and formamide. The chain is Formimidoylglutamase from Salmonella heidelberg (strain SL476).